We begin with the raw amino-acid sequence, 98 residues long: uncharacterized protein (98 aa).

The N-terminal stretch at 1–23 (MKYVALAFVLSLVILQISAQVGA) is a signal peptide.

As to expression, nacreous layer of shell (at protein level). Expressed primarily in the mantle with highest level in the mantle pallium and lower level in the mantle edge.

Its subcellular location is the secreted. This is an uncharacterized protein from Pinctada maxima (Silver-lipped pearl oyster).